The following is a 220-amino-acid chain: Demethylmenaquinone methyltransferase (220 aa).

S-adenosyl-L-methionine contacts are provided by residues Thr-47, Asp-67, and 93-94 (DA).

The protein belongs to the class I-like SAM-binding methyltransferase superfamily. MenG/UbiE family.

It carries out the reaction a 2-demethylmenaquinol + S-adenosyl-L-methionine = a menaquinol + S-adenosyl-L-homocysteine + H(+). The protein operates within quinol/quinone metabolism; menaquinone biosynthesis; menaquinol from 1,4-dihydroxy-2-naphthoate: step 2/2. Its function is as follows. Methyltransferase required for the conversion of demethylmenaquinol (DMKH2) to menaquinol (MKH2). This chain is Demethylmenaquinone methyltransferase, found in Thermus thermophilus (strain ATCC BAA-163 / DSM 7039 / HB27).